A 356-amino-acid polypeptide reads, in one-letter code: Holliday junction branch migration complex subunit RuvB (356 aa).

Residues Thr4 to Tyr191 are large ATPase domain (RuvB-L). ATP-binding positions include Leu30, Arg31, Gly72, Lys75, Thr76, Thr77, Glu138 to Tyr140, Arg181, Tyr191, and Arg228. Residue Thr76 coordinates Mg(2+). The segment at Asp192–Asp262 is small ATPAse domain (RuvB-S). Residues Pro265–Lys356 form a head domain (RuvB-H) region. DNA contacts are provided by Arg301, Arg320, and Arg325.

It belongs to the RuvB family. Homohexamer. Forms an RuvA(8)-RuvB(12)-Holliday junction (HJ) complex. HJ DNA is sandwiched between 2 RuvA tetramers; dsDNA enters through RuvA and exits via RuvB. An RuvB hexamer assembles on each DNA strand where it exits the tetramer. Each RuvB hexamer is contacted by two RuvA subunits (via domain III) on 2 adjacent RuvB subunits; this complex drives branch migration. In the full resolvosome a probable DNA-RuvA(4)-RuvB(12)-RuvC(2) complex forms which resolves the HJ.

Its subcellular location is the cytoplasm. The catalysed reaction is ATP + H2O = ADP + phosphate + H(+). Functionally, the RuvA-RuvB-RuvC complex processes Holliday junction (HJ) DNA during genetic recombination and DNA repair, while the RuvA-RuvB complex plays an important role in the rescue of blocked DNA replication forks via replication fork reversal (RFR). RuvA specifically binds to HJ cruciform DNA, conferring on it an open structure. The RuvB hexamer acts as an ATP-dependent pump, pulling dsDNA into and through the RuvAB complex. RuvB forms 2 homohexamers on either side of HJ DNA bound by 1 or 2 RuvA tetramers; 4 subunits per hexamer contact DNA at a time. Coordinated motions by a converter formed by DNA-disengaged RuvB subunits stimulates ATP hydrolysis and nucleotide exchange. Immobilization of the converter enables RuvB to convert the ATP-contained energy into a lever motion, pulling 2 nucleotides of DNA out of the RuvA tetramer per ATP hydrolyzed, thus driving DNA branch migration. The RuvB motors rotate together with the DNA substrate, which together with the progressing nucleotide cycle form the mechanistic basis for DNA recombination by continuous HJ branch migration. Branch migration allows RuvC to scan DNA until it finds its consensus sequence, where it cleaves and resolves cruciform DNA. The sequence is that of Holliday junction branch migration complex subunit RuvB from Burkholderia lata (strain ATCC 17760 / DSM 23089 / LMG 22485 / NCIMB 9086 / R18194 / 383).